The sequence spans 623 residues: Activator of C kinase protein 1 (623 aa).

A disordered region spans residues 141-230; it reads KESLGSPAVQ…GSSGGEDKLS (90 aa). Residues 152 to 161 show a composition bias toward polar residues; it reads ASISSGNRIS. Basic and acidic residues predominate over residues 176–193; that stretch reads SESRILQEKVYRTEEKAP. Residues lysine 184 and lysine 191 each participate in a glycyl lysine isopeptide (Lys-Gly) (interchain with G-Cter in ubiquitin) cross-link. Residues 206–215 show a composition bias toward polar residues; that stretch reads KINQPPTGSA. Sel1-like repeat units follow at residues 318–361, 408–444, 495–531, and 576–611; these read PPAM…KLNN, SACM…QKGD, PLAQ…AAQP, and ARTE…RMGF.

This chain is Activator of C kinase protein 1 (ACK1), found in Saccharomyces cerevisiae (strain ATCC 204508 / S288c) (Baker's yeast).